Consider the following 313-residue polypeptide: Aspartate carbamoyltransferase catalytic subunit (313 aa).

Residues Arg58 and Thr59 each contribute to the carbamoyl phosphate site. Lys86 is an L-aspartate binding site. Arg108, His136, and Gln139 together coordinate carbamoyl phosphate. The L-aspartate site is built by Arg169 and Arg224. Carbamoyl phosphate contacts are provided by Gly265 and Pro266.

Belongs to the aspartate/ornithine carbamoyltransferase superfamily. ATCase family. Heterododecamer (2C3:3R2) of six catalytic PyrB chains organized as two trimers (C3), and six regulatory PyrI chains organized as three dimers (R2).

It catalyses the reaction carbamoyl phosphate + L-aspartate = N-carbamoyl-L-aspartate + phosphate + H(+). It functions in the pathway pyrimidine metabolism; UMP biosynthesis via de novo pathway; (S)-dihydroorotate from bicarbonate: step 2/3. Its function is as follows. Catalyzes the condensation of carbamoyl phosphate and aspartate to form carbamoyl aspartate and inorganic phosphate, the committed step in the de novo pyrimidine nucleotide biosynthesis pathway. The protein is Aspartate carbamoyltransferase catalytic subunit of Natranaerobius thermophilus (strain ATCC BAA-1301 / DSM 18059 / JW/NM-WN-LF).